The primary structure comprises 106 residues: Large ribosomal subunit protein P1A (106 aa).

The interval 74 to 106 (AGGGAAAEEAAEEEKEEEAKEESDDDMGFGLFD) is disordered. Over residues 82-100 (EAAEEEKEEEAKEESDDDM) the composition is skewed to acidic residues.

Belongs to the eukaryotic ribosomal protein P1/P2 family. Component of the large ribosomal subunit (LSU). Mature ribosomes consist of a small (40S) and a large (60S) subunit. The 40S subunit contains about 32 different proteins and 1 molecule of RNA (18S). The 60S subunit contains 45 different proteins and 3 molecules of RNA (25S, 5.8S and 5S). The 5 acidic ribosomal P-proteins form the stalk structure of the 60S subunit. They are organized as a pentameric complex in which uL10/P0 interacts with 2 heterodimers, P1A-P2B and P1B-P2A. In terms of processing, phosphorylated.

It localises to the cytoplasm. In terms of biological role, component of the ribosome, a large ribonucleoprotein complex responsible for the synthesis of proteins in the cell. The small ribosomal subunit (SSU) binds messenger RNAs (mRNAs) and translates the encoded message by selecting cognate aminoacyl-transfer RNA (tRNA) molecules. The large subunit (LSU) contains the ribosomal catalytic site termed the peptidyl transferase center (PTC), which catalyzes the formation of peptide bonds, thereby polymerizing the amino acids delivered by tRNAs into a polypeptide chain. The nascent polypeptides leave the ribosome through a tunnel in the LSU and interact with protein factors that function in enzymatic processing, targeting, and the membrane insertion of nascent chains at the exit of the ribosomal tunnel. This chain is Large ribosomal subunit protein P1A (RPP1A), found in Candida albicans (strain SC5314 / ATCC MYA-2876) (Yeast).